Reading from the N-terminus, the 366-residue chain is UDP-N-acetylglucosamine--N-acetylmuramyl-(pentapeptide) pyrophosphoryl-undecaprenol N-acetylglucosamine transferase (366 aa).

Residues 14 to 16 (TGG), asparagine 125, arginine 168, serine 196, and glutamine 297 contribute to the UDP-N-acetyl-alpha-D-glucosamine site.

It belongs to the glycosyltransferase 28 family. MurG subfamily.

It is found in the cell inner membrane. It carries out the reaction di-trans,octa-cis-undecaprenyl diphospho-N-acetyl-alpha-D-muramoyl-L-alanyl-D-glutamyl-meso-2,6-diaminopimeloyl-D-alanyl-D-alanine + UDP-N-acetyl-alpha-D-glucosamine = di-trans,octa-cis-undecaprenyl diphospho-[N-acetyl-alpha-D-glucosaminyl-(1-&gt;4)]-N-acetyl-alpha-D-muramoyl-L-alanyl-D-glutamyl-meso-2,6-diaminopimeloyl-D-alanyl-D-alanine + UDP + H(+). The protein operates within cell wall biogenesis; peptidoglycan biosynthesis. In terms of biological role, cell wall formation. Catalyzes the transfer of a GlcNAc subunit on undecaprenyl-pyrophosphoryl-MurNAc-pentapeptide (lipid intermediate I) to form undecaprenyl-pyrophosphoryl-MurNAc-(pentapeptide)GlcNAc (lipid intermediate II). This chain is UDP-N-acetylglucosamine--N-acetylmuramyl-(pentapeptide) pyrophosphoryl-undecaprenol N-acetylglucosamine transferase, found in Rhodopseudomonas palustris (strain BisB5).